The sequence spans 377 residues: Carbamoyl phosphate synthase small chain (377 aa).

A CPSase region spans residues Met1–Glu186. 3 residues coordinate L-glutamine: Ser47, Gly238, and Gly240. The region spanning His190–Ala377 is the Glutamine amidotransferase type-1 domain. Catalysis depends on Cys266, which acts as the Nucleophile. Leu267, Gln270, Asn308, Gly310, and Phe311 together coordinate L-glutamine. Residues His350 and Glu352 contribute to the active site.

Belongs to the CarA family. As to quaternary structure, composed of two chains; the small (or glutamine) chain promotes the hydrolysis of glutamine to ammonia, which is used by the large (or ammonia) chain to synthesize carbamoyl phosphate. Tetramer of heterodimers (alpha,beta)4.

It carries out the reaction hydrogencarbonate + L-glutamine + 2 ATP + H2O = carbamoyl phosphate + L-glutamate + 2 ADP + phosphate + 2 H(+). It catalyses the reaction L-glutamine + H2O = L-glutamate + NH4(+). It participates in amino-acid biosynthesis; L-arginine biosynthesis; carbamoyl phosphate from bicarbonate: step 1/1. Its pathway is pyrimidine metabolism; UMP biosynthesis via de novo pathway; (S)-dihydroorotate from bicarbonate: step 1/3. Small subunit of the glutamine-dependent carbamoyl phosphate synthetase (CPSase). CPSase catalyzes the formation of carbamoyl phosphate from the ammonia moiety of glutamine, carbonate, and phosphate donated by ATP, constituting the first step of 2 biosynthetic pathways, one leading to arginine and/or urea and the other to pyrimidine nucleotides. The small subunit (glutamine amidotransferase) binds and cleaves glutamine to supply the large subunit with the substrate ammonia. The polypeptide is Carbamoyl phosphate synthase small chain (Neisseria meningitidis serogroup B (strain ATCC BAA-335 / MC58)).